A 161-amino-acid polypeptide reads, in one-letter code: Ribonuclease H (161 aa).

The RNase H type-1 domain maps to 1–142 (MLKLVKMFSD…CDKIARQSAQ (142 aa)). Residues Asp10, Glu48, Asp70, and Asp134 each coordinate Mg(2+).

It belongs to the RNase H family. In terms of assembly, monomer. Requires Mg(2+) as cofactor.

The protein resides in the cytoplasm. The catalysed reaction is Endonucleolytic cleavage to 5'-phosphomonoester.. Endonuclease that specifically degrades the RNA of RNA-DNA hybrids. This is Ribonuclease H (rnhA) from Buchnera aphidicola subsp. Schizaphis graminum (strain Sg).